The primary structure comprises 317 residues: Hairy/enhancer-of-split related with YRPW motif protein 1 (317 aa).

The interval 1 to 59 is disordered; the sequence is MKRNHDFSSSDSELDENIEVEKESADENAGANSPLGSMSPSTTSQVQARKRRRGIIEKR. A compositionally biased stretch (polar residues) spans 30–47; the sequence is GANSPLGSMSPSTTSQVQ. The 56-residue stretch at 48–103 folds into the bHLH domain; the sequence is ARKRRRGIIEKRRRDRINNSLSELRRLVPSAFEKQGSAKLEKAEILQMTVDHLKML. Residues 121–157 enclose the Orange domain; that stretch reads YRGLGFRECLAETARYLSIIEGLDNTDPLRIRLVSHL. Composition is skewed to low complexity over residues 193 to 226 and 248 to 264; these read QQQQQQGAPLARSTSSPPSSNSSSPSSSSPSAPS and PPSTSLPPGLTPPTASK. The interval 193–264 is disordered; sequence QQQQQQGAPL…PGLTPPTASK (72 aa). Positions 307 to 310 match the YRPW motif motif; it reads YRPW.

Belongs to the HEY family.

Its subcellular location is the nucleus. Transcriptional repressor which functions as a downstream effector of Notch signaling. The sequence is that of Hairy/enhancer-of-split related with YRPW motif protein 1 (hey1) from Danio rerio (Zebrafish).